The chain runs to 260 residues: PsbP domain-containing protein 4, chloroplastic (260 aa).

Belongs to the PsbP family.

The protein localises to the plastid. It localises to the chloroplast thylakoid lumen. The sequence is that of PsbP domain-containing protein 4, chloroplastic (PPD4) from Arabidopsis thaliana (Mouse-ear cress).